The following is a 360-amino-acid chain: Photosystem II protein D1 1 (360 aa).

3 consecutive transmembrane segments (helical) span residues 29–46 (YIGW…TATT), 118–133 (HFLI…QWEL), and 142–156 (WICV…AATA). Position 118 (H118) interacts with chlorophyll a. Y126 contacts pheophytin a. Positions 170 and 189 each coordinate [CaMn4O5] cluster. Residues 197–218 (FHMLGVAGVFGGALFAAMHGSL) form a helical membrane-spanning segment. H198 contributes to the chlorophyll a binding site. A quinone contacts are provided by residues H215 and 264–265 (SF). H215 serves as a coordination point for Fe cation. H272 serves as a coordination point for Fe cation. A helical membrane pass occupies residues 274 to 288 (FLGAWPVVGIWFAAL). Positions 332, 333, 342, and 344 each coordinate [CaMn4O5] cluster. Residues 345 to 360 (SGDAQMVALNAPAIEG) constitute a propeptide that is removed on maturation.

It belongs to the reaction center PufL/M/PsbA/D family. PSII is composed of 1 copy each of membrane proteins PsbA, PsbB, PsbC, PsbD, PsbE, PsbF, PsbH, PsbI, PsbJ, PsbK, PsbL, PsbM, PsbT, PsbX, PsbY, PsbZ, Psb30/Ycf12, peripheral proteins PsbO, CyanoQ (PsbQ), PsbU, PsbV and a large number of cofactors. It forms dimeric complexes. The D1/D2 heterodimer binds P680, chlorophylls that are the primary electron donor of PSII, and subsequent electron acceptors. It shares a non-heme iron and each subunit binds pheophytin, quinone, additional chlorophylls, carotenoids and lipids. D1 provides most of the ligands for the Mn4-Ca-O5 cluster of the oxygen-evolving complex (OEC). There is also a Cl(-1) ion associated with D1 and D2, which is required for oxygen evolution. The PSII complex binds additional chlorophylls, carotenoids and specific lipids. is required as a cofactor. C-terminally processed by CtpA; processing is essential to allow assembly of the oxygen-evolving complex and photosynthetic growth. Post-translationally, tyr-161 forms a radical intermediate that is referred to as redox-active TyrZ, YZ or Y-Z. In terms of processing, C-terminally processed by CtpA; processing is essential to allow assembly of the oxygen-evolving complex and thus photosynthetic growth.

It localises to the cellular thylakoid membrane. It carries out the reaction 2 a plastoquinone + 4 hnu + 2 H2O = 2 a plastoquinol + O2. Photosystem II (PSII) is a light-driven water:plastoquinone oxidoreductase that uses light energy to abstract electrons from H(2)O, generating O(2) and a proton gradient subsequently used for ATP formation. It consists of a core antenna complex that captures photons, and an electron transfer chain that converts photonic excitation into a charge separation. The D1/D2 (PsbA/PsbD) reaction center heterodimer binds P680, the primary electron donor of PSII as well as several subsequent electron acceptors. This is Photosystem II protein D1 1 from Synechocystis sp. (strain ATCC 27184 / PCC 6803 / Kazusa).